A 500-amino-acid polypeptide reads, in one-letter code: Cytochrome P450 2D16 (500 aa).

The residue at position 249 (S249) is a Phosphoserine. C446 lines the heme pocket.

It belongs to the cytochrome P450 family. Heme is required as a cofactor. Expressed at high levels in the inner zone of the adrenal cortex.

The protein localises to the endoplasmic reticulum membrane. It localises to the microsome membrane. The catalysed reaction is an organic molecule + reduced [NADPH--hemoprotein reductase] + O2 = an alcohol + oxidized [NADPH--hemoprotein reductase] + H2O + H(+). Its function is as follows. Cytochromes P450 are a group of heme-thiolate monooxygenases. In liver microsomes, this enzyme is involved in an NADPH-dependent electron transport pathway. It oxidizes a variety of structurally unrelated compounds, including steroids, fatty acids, and xenobiotics. This Cavia porcellus (Guinea pig) protein is Cytochrome P450 2D16 (CYP2D16).